The chain runs to 50 residues: Photosystem I reaction center subunit IX (50 aa).

Residues 7-27 (YLSTAPVLAILCCSFLAGLVI) form a helical membrane-spanning segment.

The protein belongs to the PsaJ family.

The protein resides in the plastid. It is found in the chloroplast thylakoid membrane. Functionally, may help in the organization of the PsaE and PsaF subunits. This chain is Photosystem I reaction center subunit IX, found in Pinus koraiensis (Korean pine).